A 347-amino-acid chain; its full sequence is Spermidine/putrescine import ATP-binding protein PotA (347 aa).

The ABC transporter domain maps to 6–238; sequence LEIRNLSHYY…PKTKFVADFI (233 aa). An ATP-binding site is contributed by 40–47; sequence GPSGCGKT.

This sequence belongs to the ABC transporter superfamily. Spermidine/putrescine importer (TC 3.A.1.11.1) family. The complex is composed of two ATP-binding proteins (PotA), two transmembrane proteins (PotB and PotC) and a solute-binding protein (PotD).

It is found in the cell inner membrane. It catalyses the reaction ATP + H2O + polyamine-[polyamine-binding protein]Side 1 = ADP + phosphate + polyamineSide 2 + [polyamine-binding protein]Side 1.. Part of the ABC transporter complex PotABCD involved in spermidine/putrescine import. Responsible for energy coupling to the transport system. The chain is Spermidine/putrescine import ATP-binding protein PotA from Borrelia garinii subsp. bavariensis (strain ATCC BAA-2496 / DSM 23469 / PBi) (Borreliella bavariensis).